Reading from the N-terminus, the 45-residue chain is Large ribosomal subunit protein bL34 (45 aa).

Residues 1 to 10 (MTQRTLGGTN) show a composition bias toward polar residues. The disordered stretch occupies residues 1–45 (MTQRTLGGTNRKQKRTSGFRARMRTHNGRKVIQARRSKGRHRLAV). Basic residues predominate over residues 11–45 (RKQKRTSGFRARMRTHNGRKVIQARRSKGRHRLAV).

It belongs to the bacterial ribosomal protein bL34 family.

This Synechocystis sp. (strain ATCC 27184 / PCC 6803 / Kazusa) protein is Large ribosomal subunit protein bL34 (rpmH).